We begin with the raw amino-acid sequence, 412 residues long: Phosphoglycerate kinase (412 aa).

Substrate contacts are provided by residues 24–26, arginine 44, 67–70, arginine 126, and arginine 170; these read DLN and HLGR. ATP is bound by residues lysine 220, glycine 308, glutamate 339, and 368–371; that span reads GGDS.

Belongs to the phosphoglycerate kinase family. As to quaternary structure, monomer.

Its subcellular location is the cytoplasm. It carries out the reaction (2R)-3-phosphoglycerate + ATP = (2R)-3-phospho-glyceroyl phosphate + ADP. It participates in carbohydrate degradation; glycolysis; pyruvate from D-glyceraldehyde 3-phosphate: step 2/5. The protein is Phosphoglycerate kinase of Mycobacteroides abscessus (strain ATCC 19977 / DSM 44196 / CCUG 20993 / CIP 104536 / JCM 13569 / NCTC 13031 / TMC 1543 / L948) (Mycobacterium abscessus).